A 1056-amino-acid chain; its full sequence is MASQPNSSAKKKEEKGKNIQVVVRCRPFNLAERKASAHSIVECDPVRKEVSVRTGGLADKSSRKTYTFDMVFGASTKQIDVYRSVVCPILDEVIMGYNCTIFAYGQTGTGKTFTMEGERSPNEEYTWEEDPLAGIIPRTLHQIFEKLTDNGTEFSVKVSLLEIYNEELFDLLNPSSDVSERLQMFDDPRNKRGVIIKGLEEITVHNKDEVYQILEKGAAKRTTAATLMNAYSSRSHSVFSVTIHMKETTIDGEELVKIGKLNLVDLAGSENIGRSGAVDKRAREAGNINQSLLTLGRVITALVERTPHVPYRESKLTRILQDSLGGRTRTSIIATISPASLNLEETLSTLEYAHRAKNILNKPEVNQKLTKKALIKEYTEEIERLKRDLAAAREKNGVYISEENFRVMSGKLTVQEEQIVELIEKIGAVEEELNRVTELFMDNKNELDQCKSDLQNKTQELETTQKHLQETKLQLVKEEYITSALESTEEKLHDAASKLLNTVEETTKDVSGLHSKLDRKKAVDQHNAEAQDIFGKNLNSLFNNMEELIKDGSSKQKAMLEVHKTLFGNLLSSSVSALDTITTVALGSLTSIPENVSTHVSQIFNMILKEQSLAAESKTVLQELINVLKTDLLSSLEMILSPTVVSILKINSQLKHIFKTSLTVADKIEDQKKELDGFLSILCNNLHELQENTICSLVESQKQCGNLTEDLKTIKQTHSQELCKLMNLWTERFCALEEKCENIQKPLSSVQENIQQKSKDIVNKMTFHSQKFCADSDGFSQELRNFNQEGTKLVEESVKHSDKLNGNLEKISQETEQRCESLNTRTVYFSEQWVSSLNEREQELHNLLEVVSQCCEASSSDITEKSDGRKAAHEKQHNIFLDQMTIDEDKLIAQNLELNETIKIGLTKLNCFLEQDLKLDIPTGTTPQRKSYLYPSTLVRTEPREHLLDQLKRKQPELLMMLNCSENNKEETIPDVDVEEAVLGQYTEEPLSQEPSVDAGVDCSSIGGVPFFQHKKSHGKDKENRGINTLERSKVEETTEHLVTKSRLPLRAQINL.

In terms of domain architecture, Kinesin motor spans 18–359; it reads NIQVVVRCRP…LEYAHRAKNI (342 aa). 105-112 is a binding site for ATP; the sequence is GQTGTGKT. An N6-acetyllysine modification is found at lysine 146. Coiled coils occupy residues 364-480 and 736-763; these read EVNQ…KEEY and LEEK…DIVN. A Phosphothreonine modification is found at threonine 458. A Glycyl lysine isopeptide (Lys-Gly) (interchain with G-Cter in SUMO2) cross-link involves residue lysine 477. Phosphothreonine is present on threonine 925. A Phosphothreonine; by CDK1 modification is found at threonine 926. Phosphoserine; by NEK6 is present on serine 1033. Lysine 1034 participates in a covalent cross-link: Glycyl lysine isopeptide (Lys-Gly) (interchain with G-Cter in ubiquitin).

Belongs to the TRAFAC class myosin-kinesin ATPase superfamily. Kinesin family. BimC subfamily. Interacts with the thyroid hormone receptor in the presence of thyroid hormone. Component of a large chromatin remodeling complex, at least composed of MYSM1, PCAF, RBM10 and KIF11/TRIP5. Interacts (via C-terminus) with the kinase NEK6 in both interphase and mitosis. Interacts with RARRES1 and AGBL2. Interacts with TPX2. In terms of processing, phosphorylated exclusively on serine during S phase, but on both serine and Thr-926 during mitosis, so controlling the association of KIF11 with the spindle apparatus (probably during early prophase). A subset of this protein primarily localized at the spindle pole is phosphorylated by NEK6 during mitosis; phosphorylation is required for mitotic function. Post-translationally, ubiquitinated at Lys-1034 by UHRF1 via 'Lys-63'-linked ubiquitin chains, leading to interaction with spindle assembly factor TPX2, thereby ensuring accurate distribution to the spindles during metaphase.

It is found in the cytoplasm. Its subcellular location is the cytoskeleton. The protein resides in the spindle pole. Functionally, motor protein required for establishing a bipolar spindle and thus contributing to chromosome congression during mitosis. Required in non-mitotic cells for transport of secretory proteins from the Golgi complex to the cell surface. In Homo sapiens (Human), this protein is Kinesin-like protein KIF11 (KIF11).